Reading from the N-terminus, the 289-residue chain is ATP synthase gamma chain (289 aa).

It belongs to the ATPase gamma chain family. F-type ATPases have 2 components, CF(1) - the catalytic core - and CF(0) - the membrane proton channel. CF(1) has five subunits: alpha(3), beta(3), gamma(1), delta(1), epsilon(1). CF(0) has three main subunits: a, b and c.

The protein resides in the cell inner membrane. Its function is as follows. Produces ATP from ADP in the presence of a proton gradient across the membrane. The gamma chain is believed to be important in regulating ATPase activity and the flow of protons through the CF(0) complex. The protein is ATP synthase gamma chain of Coxiella burnetii (strain Dugway 5J108-111).